Reading from the N-terminus, the 88-residue chain is Sec-independent protein translocase protein TatA (88 aa).

A helical transmembrane segment spans residues 1–21; it reads MGSLSPWHWAILAVVVIVLFG. Positions 43-52 are enriched in basic and acidic residues; it reads MREMQSETKA. Residues 43–88 form a disordered region; sequence MREMQSETKAEPSAIETNTANPTPVQSQRIDPAAATGQDQTEARPA. A compositionally biased stretch (polar residues) spans 57–71; sequence IETNTANPTPVQSQR.

It belongs to the TatA/E family. The Tat system comprises two distinct complexes: a TatABC complex, containing multiple copies of TatA, TatB and TatC subunits, and a separate TatA complex, containing only TatA subunits. Substrates initially bind to the TatABC complex, which probably triggers association of the separate TatA complex to form the active translocon.

Its subcellular location is the cell membrane. Functionally, part of the twin-arginine translocation (Tat) system that transports large folded proteins containing a characteristic twin-arginine motif in their signal peptide across membranes. TatA could form the protein-conducting channel of the Tat system. The polypeptide is Sec-independent protein translocase protein TatA (Mycobacterium marinum (strain ATCC BAA-535 / M)).